The chain runs to 309 residues: Protein FdhE (309 aa).

It belongs to the FdhE family.

It is found in the cytoplasm. Necessary for formate dehydrogenase activity. This is Protein FdhE from Shigella boydii serotype 18 (strain CDC 3083-94 / BS512).